The sequence spans 1013 residues: MFAWWGRTVYQFRYIVIGVMVALCLGGGVYGISLGNHVTQSGFYDEGSQSVAASLIGDEVYGRDRTSHVVAILTPPDDKKVTDKAWQKKVTEELDQVVKDHEDQIVGWVGWLKAPDTTDPTVSAMKTQDLRHTFISIPLQGDDDDEILKNYQVVEPELQQVNGGDIRLAGLNPLASELTGTIGEDQKRAEVAAIPLVAVVLFFVFGTVIAAALPAIIGGLAIAGALGIMRLVAEFTPVHFFAQPVVTLIGLGIAIDYGLFIVSRFREEIAEGYDTEAAVRRTVMTSGRTVVFSAVIIVASSVPLLLFPQGFLKSITYAIIASVMLAAILSITVLAAALAILGPRVDALGVTTLLKIPFLANWQFSRRIIDWFAEKTQKTKTREEVERGFWGRLVNVVMKRPIAFAAPILVVMVLLIIPLGQLSLGGISEKYLPPDNAVRQSQEQFDKLFPGFRTEPLTLVMKREDGEPITDAQIADMRAKALTVSGFTDPDNDPEKMWKERPANDSGSKDPSVRVIQNGLENRNDAAKKIDELRALQPPHGIEVFVGGTPALEQDSIHSLFDKLPLMALILIVTTTVLMFLAFGSVVLPIKAALMSALTLGSTMGILTWMFVDGHGSGLMNYTPQPLMAPMIGLIIAVIWGLSTDYEVFLVSRMVEARERGMSTAEAIRIGTATTGRLITGAALILAVVAGAFVFSDLVMMKYLAFGLLIALLLDATIIRMFLVPAVMKLLGDDCWWAPRWMKRVQEKLGLGETELPDERKRPTVRESETDQRALVGVGAPPPPPRPHDPTHPAPEPVRPMPPMRSNAPSAAGTARISTPPQPPQPPQAPAQQAGDEPATTRFAMARNAVRNAVNSAVHGGAGSAAAPTERAPRPGGPAQPPAPPQREEREIESWLGALRGPAPAKNVPQPPAQPQRPSTDTTRAMPPQGRPPAGPADRGNENAPTTAFSAQRPPNGGAPADATTAIPTPPQREQEPSTEKLNTREDAPEDPETKRRGGGMSAQDLLRREGRL.

Residues 1–14 lie on the Cytoplasmic side of the membrane; sequence MFAWWGRTVYQFRY. The helical transmembrane segment at 15–35 threads the bilayer; it reads IVIGVMVALCLGGGVYGISLG. At 36-196 the chain is on the periplasmic side; that stretch reads NHVTQSGFYD…KRAEVAAIPL (161 aa). 40–44 contributes to the a 1,2-diacylglycero-3-phosphoethanolamine binding site; it reads QSGFY. Transmembrane regions (helical) follow at residues 197-217 and 218-238; these read VAVV…PAII and GGLA…FTPV. The Periplasmic segment spans residues 239 to 240; the sequence is HF. Residues 241–261 traverse the membrane as a helical segment; the sequence is FAQPVVTLIGLGIAIDYGLFI. Residues 262 to 290 are Cytoplasmic-facing; sequence VSRFREEIAEGYDTEAAVRRTVMTSGRTV. The chain crosses the membrane as a helical span at residues 291 to 311; the sequence is VFSAVIIVASSVPLLLFPQGF. The Periplasmic portion of the chain corresponds to 312-317; that stretch reads LKSITY. A helical transmembrane segment spans residues 318-338; the sequence is AIIASVMLAAILSITVLAAAL. Over 339 to 401 the chain is Cytoplasmic; sequence AILGPRVDAL…RLVNVVMKRP (63 aa). A helical transmembrane segment spans residues 402-422; sequence IAFAAPILVVMVLLIIPLGQL. Topologically, residues 423 to 567 are periplasmic; sequence SLGGISEKYL…HSLFDKLPLM (145 aa). The disordered stretch occupies residues 485–513; that stretch reads SGFTDPDNDPEKMWKERPANDSGSKDPSV. The segment covering 493-512 has biased composition (basic and acidic residues); the sequence is DPEKMWKERPANDSGSKDPS. A helical membrane pass occupies residues 568 to 588; the sequence is ALILIVTTTVLMFLAFGSVVL. Residues 589-591 are Cytoplasmic-facing; the sequence is PIK. A helical transmembrane segment spans residues 592-612; that stretch reads AALMSALTLGSTMGILTWMFV. Topologically, residues 613–630 are periplasmic; it reads DGHGSGLMNYTPQPLMAP. Residues 631 to 651 traverse the membrane as a helical segment; sequence MIGLIIAVIWGLSTDYEVFLV. Asp-645 contributes to the SQ109 binding site. Topologically, residues 652–678 are cytoplasmic; that stretch reads SRMVEARERGMSTAEAIRIGTATTGRL. The chain crosses the membrane as a helical span at residues 679–699; it reads ITGAALILAVVAGAFVFSDLV. The Periplasmic segment spans residues 700–703; the sequence is MMKY. A helical membrane pass occupies residues 704-724; sequence LAFGLLIALLLDATIIRMFLV. The Cytoplasmic portion of the chain corresponds to 725 to 1013; the sequence is PAVMKLLGDD…QDLLRREGRL (289 aa). The disordered stretch occupies residues 754-1013; that stretch reads TELPDERKRP…QDLLRREGRL (260 aa). The segment covering 757 to 772 has biased composition (basic and acidic residues); the sequence is PDERKRPTVRESETDQ. Composition is skewed to pro residues over residues 792–803 and 820–829; these read HPAPEPVRPMPP and PPQPPQPPQA. Over residues 842–867 the composition is skewed to low complexity; the sequence is RFAMARNAVRNAVNSAVHGGAGSAAA. Pro residues predominate over residues 875-885; it reads PGGPAQPPAPP. Residues 973 to 996 show a composition bias toward basic and acidic residues; the sequence is REQEPSTEKLNTREDAPEDPETKR.

Belongs to the resistance-nodulation-cell division (RND) (TC 2.A.6) family. MmpL subfamily. As to quaternary structure, monomer. Interacts with TtfA (via N-terminus); active trehalose monomycolate (TMM) biosynthesis is not required for the complex formation. Interacts with MSMEG_5308.

It is found in the cell inner membrane. The protein resides in the cell septum. The protein localises to the cell tip. With respect to regulation, inhibited by the antimycobacterial compound BM212, a pyrrole derivative. Inhibited by the antitubercular drug SQ109. Inhibited by the adamantyl urea derivative AU1235, the indole carboxamide ICA38 and rimonabant, the antagonist for the cannabinoid receptor CB1. The dissociation constant (Kd) values for SQ109, AU1235, ICA38 and rimonabant are 1.65 uM, 0.29, 0.16 and 29.5, respectively. Inhibitory effects are due to binding of the inhibitors at the proton-transportation channel most likely dissipating the transmembrane electrochemical proton gradient needed for substrate translocation. Transports trehalose monomycolate (TMM) to the cell wall. Flips TMM across the inner membrane. Membrane potential is not required for this function. Transports probably phosphatidylethanolamine (PE) as well. Binds specifically both TMM and PE, but not trehalose dimycolate (TDM). Also binds diacylglycerol (DAG) and other phospholipids, including phosphatidylglycerol (PG), phosphatidylinositol (PI), and cardiolipin (CDL). Contributes to membrane potential, cell wall composition, antibiotic susceptibility and fitness. The sequence is that of Trehalose monomycolate exporter MmpL3 from Mycolicibacterium smegmatis (strain ATCC 700084 / mc(2)155) (Mycobacterium smegmatis).